The sequence spans 423 residues: Histidine--tRNA ligase (423 aa).

It belongs to the class-II aminoacyl-tRNA synthetase family. As to quaternary structure, homodimer.

The protein resides in the cytoplasm. The enzyme catalyses tRNA(His) + L-histidine + ATP = L-histidyl-tRNA(His) + AMP + diphosphate + H(+). The sequence is that of Histidine--tRNA ligase from Staphylococcus haemolyticus (strain JCSC1435).